The chain runs to 300 residues: Cutinase est2 (300 aa).

An N-terminal signal peptide occupies residues 1–39; it reads MSVTTPRRETSLLSRALRATAAAATAVVATVALAAPAQA. Tyr-99 contacts poly(ethylene terephthalate). Ser-169 serves as the catalytic Nucleophile. Poly(ethylene terephthalate) contacts are provided by Met-170 and Trp-194. Glu-213 contributes to the Ca(2+) binding site. The active-site Charge relay system is the Asp-215. Residue Asp-243 coordinates Ca(2+). His-247 (charge relay system) is an active-site residue. An intrachain disulfide couples Cys-280 to Cys-298. Glu-292 provides a ligand contact to Ca(2+).

It belongs to the AB hydrolase superfamily. In terms of assembly, monomer. The cofactor is Ca(2+).

The protein resides in the secreted. The protein localises to the periplasm. It catalyses the reaction an acetyl ester + H2O = an aliphatic alcohol + acetate + H(+). It carries out the reaction (ethylene terephthalate)(n) + H2O = (ethylene terephthalate)(n-1) + 4-[(2-hydroxyethoxy)carbonyl]benzoate + H(+). The catalysed reaction is a butanoate ester + H2O = an aliphatic alcohol + butanoate + H(+). The enzyme catalyses cutin + H2O = cutin monomers.. It catalyses the reaction a hexanoate ester + H2O = an aliphatic alcohol + hexanoate + H(+). It carries out the reaction an octanoate ester + H2O = an aliphatic alcohol + octanoate + H(+). Activated by calcium ions. Activated by magnesium ions. Activated by manganese ions. Inhibited by the serine hydrolase inhibitor phenylmethanesulfonyl fluoride (PMSF). Inhibited by the chelator ethylenediaminetetraacetic acid (EDTA). Inhibited by iron ions. Inhibited by aluminum ions. Inhibited by rubidium ions. Inhibited by lithium ions. Functionally, catalyzes the hydrolysis of cutin, a polyester that forms the structure of plant cuticle. Shows esterase activity towards p-nitrophenol-linked aliphatic esters (pNP-aliphatic esters). Capable of degrading the plastic poly(ethylene terephthalate) (PET), the most abundant polyester plastic in the world. Can also depolymerize the synthetic polyesters poly(epsilon-caprolactone) (PCL), poly(butylene succinate-co-adipate) (PBSA), poly(butylene succinate) (PBS), and poly(lactic acid) (PLA). The sequence is that of Cutinase est2 from Thermobifida alba (Thermomonospora alba).